The sequence spans 494 residues: Caspase-8 (494 aa).

A propeptide spanning residues 1–242 is cleaved from the precursor; it reads MAGSNLLIHL…QEIESDNQQS (242 aa). Residues His345 and Cys386 contribute to the active site. Positions 401 to 410 are excised as a propeptide; sequence RIDVTTVSPD.

It belongs to the peptidase C14A family. Heterotetramer that consists of two anti-parallel arranged heterodimers, each one formed by a 15 kDa (caspase-8 subunit p15) and a 10 kDa (caspase-8 subunit p10) subunit. Interacts (via N-terminus) with Diap2; likely to bind Diap2 simultaneously with Fadd to form a trimeric complex. Interacts with Dark (via N-terminus). In terms of processing, polyubiquitinated by Diap2 following activation of the immune deficiency (Imd) pathway. Constitutively expressed in fat bodies of larvae and adults.

The protein resides in the cytoplasm. The enzyme catalyses Strict requirement for Asp at position P1 and has a preferred cleavage sequence of (Leu/Asp/Val)-Glu-Thr-Asp-|-(Gly/Ser/Ala).. In terms of biological role, effector of the programmed cell death (PCD) activators rpr, grim and hid. May play an apoptotic role in the germline as well as soma. Fadd interacts with Dredd to promote cleavage of Dredd and is necessary and sufficient for enhancing Dredd-induced apoptosis. Plays a role in the innate immune response. Required for resistance to Gram-negative bacterial infection. Diap2-mediated ubiquitination of Dredd is critical for processing of imd and rel and the subsequent expression of antimicrobial genes such as DptA. This Drosophila melanogaster (Fruit fly) protein is Caspase-8.